A 255-amino-acid chain; its full sequence is Glioma pathogenesis-related protein 1 (255 aa).

The first 17 residues, 1 to 17 (MQVILAVIVWMASSVSS), serve as a signal peptide directing secretion. In terms of domain architecture, SCP spans 39 to 164 (QVHNQLRSKV…PNGANFICDY (126 aa)). The helical transmembrane segment at 224-244 (SLFLIAKSVLLLLSVIITIWV) threads the bilayer.

This sequence belongs to the CRISP family.

The protein resides in the membrane. The chain is Glioma pathogenesis-related protein 1 (Glipr1) from Mus musculus (Mouse).